A 696-amino-acid polypeptide reads, in one-letter code: uncharacterized protein (696 aa).

A run of 10 helical transmembrane segments spans residues 38 to 58 (IISI…NALA), 107 to 127 (LIYV…GYVV), 215 to 235 (AMAS…IFAL), 245 to 265 (SLFT…VVAL), 292 to 312 (TLPF…LIYL), 329 to 349 (VFFV…ILGE), 380 to 400 (FWVT…LTSA), 402 to 422 (FGAA…ACIG), 433 to 453 (FPSL…FLSS), and 457 to 477 (LVVA…IALP). CBS domains lie at 527–587 (RSPE…PMSS) and 617–674 (IHPT…THTG).

This sequence belongs to the chloride channel (TC 2.A.49) family.

The protein localises to the membrane. Its function is as follows. Voltage-gated chloride channel. This is an uncharacterized protein from Schizosaccharomyces pombe (strain 972 / ATCC 24843) (Fission yeast).